Consider the following 402-residue polypeptide: 2,3-bisphosphoglycerate-independent phosphoglycerate mutase 2 (402 aa).

This sequence belongs to the BPG-independent phosphoglycerate mutase family. A-PGAM subfamily.

It catalyses the reaction (2R)-2-phosphoglycerate = (2R)-3-phosphoglycerate. The protein operates within carbohydrate degradation; glycolysis; pyruvate from D-glyceraldehyde 3-phosphate: step 3/5. Catalyzes the interconversion of 2-phosphoglycerate and 3-phosphoglycerate. This Methanothermobacter thermautotrophicus (strain ATCC 29096 / DSM 1053 / JCM 10044 / NBRC 100330 / Delta H) (Methanobacterium thermoautotrophicum) protein is 2,3-bisphosphoglycerate-independent phosphoglycerate mutase 2 (apgM2).